A 103-amino-acid chain; its full sequence is Urease subunit gamma (103 aa).

This sequence belongs to the urease gamma subunit family. In terms of assembly, heterotrimer of UreA (gamma), UreB (beta) and UreC (alpha) subunits. Three heterotrimers associate to form the active enzyme.

It is found in the cytoplasm. It carries out the reaction urea + 2 H2O + H(+) = hydrogencarbonate + 2 NH4(+). Its pathway is nitrogen metabolism; urea degradation; CO(2) and NH(3) from urea (urease route): step 1/1. The chain is Urease subunit gamma from Paracoccus denitrificans (strain Pd 1222).